Here is a 383-residue protein sequence, read N- to C-terminus: Histidine decarboxylase (383 aa).

His-120 lines the substrate pocket. N6-(pyridoxal phosphate)lysine is present on Lys-233.

The protein belongs to the group II decarboxylase family. Homotetramer. Requires pyridoxal 5'-phosphate as cofactor.

The catalysed reaction is L-histidine + H(+) = histamine + CO2. The polypeptide is Histidine decarboxylase (Acinetobacter baumannii (strain AB307-0294)).